We begin with the raw amino-acid sequence, 104 residues long: Small ribosomal subunit protein uS10 (104 aa).

Belongs to the universal ribosomal protein uS10 family. Part of the 30S ribosomal subunit.

In terms of biological role, involved in the binding of tRNA to the ribosomes. In Thermosynechococcus vestitus (strain NIES-2133 / IAM M-273 / BP-1), this protein is Small ribosomal subunit protein uS10.